The following is a 179-amino-acid chain: Large ribosomal subunit protein uL5 (179 aa).

This sequence belongs to the universal ribosomal protein uL5 family. Part of the 50S ribosomal subunit; part of the 5S rRNA/L5/L18/L25 subcomplex. Contacts the 5S rRNA and the P site tRNA. Forms a bridge to the 30S subunit in the 70S ribosome.

This is one of the proteins that bind and probably mediate the attachment of the 5S RNA into the large ribosomal subunit, where it forms part of the central protuberance. In the 70S ribosome it contacts protein S13 of the 30S subunit (bridge B1b), connecting the 2 subunits; this bridge is implicated in subunit movement. Contacts the P site tRNA; the 5S rRNA and some of its associated proteins might help stabilize positioning of ribosome-bound tRNAs. This chain is Large ribosomal subunit protein uL5, found in Buchnera aphidicola subsp. Cinara cedri (strain Cc).